We begin with the raw amino-acid sequence, 104 residues long: Protein translation factor SUI1 homolog (104 aa).

This sequence belongs to the SUI1 family.

The polypeptide is Protein translation factor SUI1 homolog (Ignicoccus hospitalis (strain KIN4/I / DSM 18386 / JCM 14125)).